Reading from the N-terminus, the 635-residue chain is Extracellular metalloproteinase 1 (635 aa).

An N-terminal signal peptide occupies residues 1-19 (MHGLLLAAGLLSLPLHVLA). Positions 20–246 (HPQPSTSTSL…VHNVVDYVAH (227 aa)) are excised as a propeptide. N-linked (GlcNAc...) asparagine glycosylation is present at Asn-287. His-430 contacts Zn(2+). Glu-431 is an active-site residue. His-434 is a Zn(2+) binding site. N-linked (GlcNAc...) asparagine glycosylation is found at Asn-475, Asn-594, and Asn-623.

Belongs to the peptidase M36 family. It depends on Zn(2+) as a cofactor.

The protein resides in the secreted. Its function is as follows. Secreted metalloproteinase probably acting as a virulence factor. The sequence is that of Extracellular metalloproteinase 1 (MEP1) from Trichophyton rubrum (Athlete's foot fungus).